The sequence spans 284 residues: Anaerobic dimethyl sulfoxide reductase chain YnfH (284 aa).

Residues 1–9 (MGNGWHEWP) are Periplasmic-facing. A helical transmembrane segment spans residues 10 to 30 (LVIFTVLGQCVVGALIVSGIG). At 31–45 (WFAAKNDADRQRIVR) the chain is on the cytoplasmic side. The helical transmembrane segment at 46-66 (GMFFLWLLMGVGFIASVMHLG) threads the bilayer. Residues 67–86 (SPLRAFNSLNRIGASGLSNE) lie on the Periplasmic side of the membrane. A helical transmembrane segment spans residues 87 to 107 (IAAGSIFFAVGGLWWLVAVIG). The Cytoplasmic portion of the chain corresponds to 108 to 115 (KMPQALGK). A helical transmembrane segment spans residues 116-136 (LWLLFSMALGVIFVWMMTCVY). The Periplasmic segment spans residues 137 to 148 (QIDTVPTWHNGY). Residues 149-169 (TTLAFFLTVLLSGPILAAAIL) traverse the membrane as a helical segment. Residues 170–180 (RAARVTFNTTP) lie on the Cytoplasmic side of the membrane. Residues 181 to 201 (FAIISVLALIACAGVIVLQGL) form a helical membrane-spanning segment. Residues 202-222 (SLASIHSSVQQASALVPDYAS) lie on the Periplasmic side of the membrane. The chain crosses the membrane as a helical span at residues 223-243 (LQVWRVVLLCAGLGCWLCPLI). The Cytoplasmic portion of the chain corresponds to 244-250 (RRREPHV). The chain crosses the membrane as a helical span at residues 251-271 (AGLILGLILILGGEMIGRVLF). The Periplasmic portion of the chain corresponds to 272–284 (YGLHMTVGMAIAG).

The protein belongs to the DmsC family. As to quaternary structure, the complex consists of three subunits: YnfF, the reductase; YnfG, an electron transfer protein, and YnfH, a membrane anchor protein.

The protein localises to the cell inner membrane. Functionally, terminal reductase during anaerobic growth on various sulfoxide and N-oxide compounds. The C subunit anchors the other two subunits to the membrane and stabilize the catalytic subunits. The chain is Anaerobic dimethyl sulfoxide reductase chain YnfH (ynfH) from Escherichia coli (strain K12).